The sequence spans 614 residues: Type VII secretion system protein EssD (614 aa).

The tract at residues 417 to 445 (QNHVTHGPKDSMVRSEGKHSISSHEMNSS) is disordered. The span at 423–435 (GPKDSMVRSEGKH) shows a compositional bias: basic and acidic residues.

The protein belongs to the EssD family. In terms of assembly, interacts (via C-terminal) with EssG; this interaction blocks EssD activity. Interacts with EssE.

It is found in the secreted. The protein localises to the cell membrane. Component of the type VII secretion system (Ess). Plays a role in Ess secretion during infection. Required for the efficient secretion of EsxA. Required for abscess formation and staphylococcal persistence in host tissues. Possesses a toxic DNase activity that is modulated by EsaG by forming a nuclease toxin-antitoxin pair. This nuclease toxin targets competitor bacteria. In Staphylococcus aureus (strain USA300), this protein is Type VII secretion system protein EssD.